Reading from the N-terminus, the 341-residue chain is NADH-quinone oxidoreductase subunit H (341 aa).

9 helical membrane-spanning segments follow: residues 4 to 24 (LVNI…LTYF), 38 to 58 (PSVV…KLLI), 70 to 90 (ILFI…WAVI), 115 to 135 (VGVL…IIAG), 161 to 181 (IGLI…GEMV), 187 to 207 (MPFW…ISLL), 239 to 259 (LFFL…TIFF), 275 to 295 (IPGL…FIWI), and 314 to 334 (VFLP…LFTG).

Belongs to the complex I subunit 1 family. In terms of assembly, NDH-1 is composed of 14 different subunits. Subunits NuoA, H, J, K, L, M, N constitute the membrane sector of the complex.

The protein resides in the cell membrane. The enzyme catalyses a quinone + NADH + 5 H(+)(in) = a quinol + NAD(+) + 4 H(+)(out). Functionally, NDH-1 shuttles electrons from NADH, via FMN and iron-sulfur (Fe-S) centers, to quinones in the respiratory chain. The immediate electron acceptor for the enzyme in this species is believed to be ubiquinone. Couples the redox reaction to proton translocation (for every two electrons transferred, four hydrogen ions are translocated across the cytoplasmic membrane), and thus conserves the redox energy in a proton gradient. This subunit may bind ubiquinone. This chain is NADH-quinone oxidoreductase subunit H, found in Wolbachia pipientis wMel.